Consider the following 248-residue polypeptide: Methyl-coenzyme M reductase subunit gamma (248 aa).

Arginine 121 contributes to the coenzyme M binding site.

It belongs to the methyl-coenzyme M reductase gamma subunit family. In terms of assembly, MCR is a hexamer of two alpha, two beta, and two gamma chains, forming a dimer of heterotrimers. Requires coenzyme F430 as cofactor.

It is found in the cytoplasm. It catalyses the reaction coenzyme B + methyl-coenzyme M = methane + coenzyme M-coenzyme B heterodisulfide. It functions in the pathway one-carbon metabolism; methyl-coenzyme M reduction; methane from methyl-coenzyme M: step 1/1. Component of the methyl-coenzyme M reductase (MCR) I that catalyzes the reductive cleavage of methyl-coenzyme M (CoM-S-CH3 or 2-(methylthio)ethanesulfonate) using coenzyme B (CoB or 7-mercaptoheptanoylthreonine phosphate) as reductant which results in the production of methane and the mixed heterodisulfide of CoB and CoM (CoM-S-S-CoB). This is the final step in methanogenesis. This Methanosarcina barkeri (strain Fusaro / DSM 804) protein is Methyl-coenzyme M reductase subunit gamma (mcrG).